The chain runs to 37 residues: Large ribosomal subunit protein bL36c (37 aa).

The protein belongs to the bacterial ribosomal protein bL36 family.

Its subcellular location is the plastid. It is found in the chloroplast. The sequence is that of Large ribosomal subunit protein bL36c (rpl36) from Anthoceros angustus (Hornwort).